Here is a 354-residue protein sequence, read N- to C-terminus: Ornithine transcarbamylase, mitochondrial (354 aa).

The transit peptide at 1–32 (MLFNLKNLYRITKLTQNSKHLPRHFCRGPPNQ) directs the protein to the mitochondrion. Carbamoyl phosphate is bound by residues 90–94 (STRTR), Arg-141, and His-168. Arg-141 lines the L-ornithine pocket. L-ornithine is bound by residues Asn-199, 263–267 (DTWIS), 302–305 (HCLP), and Arg-330. Residue Cys-303 is part of the active site. Arg-330 provides a ligand contact to carbamoyl phosphate.

Belongs to the aspartate/ornithine carbamoyltransferase superfamily. OTCase family. Homotrimer. Cleavage of the precursor form to the active form occurs only in the kidney. In terms of tissue distribution, expressed in kidney, brain, heart, liver, pancreas, gizzard, small intestine and breast muscle. More abundant in mitochondrion-rich organs (heart, liver and brain) than in other organs. Activity is only detected in the kidney.

It is found in the mitochondrion matrix. It catalyses the reaction carbamoyl phosphate + L-ornithine = L-citrulline + phosphate + H(+). The protein operates within nitrogen metabolism; urea cycle; L-citrulline from L-ornithine and carbamoyl phosphate: step 1/1. Its activity is regulated as follows. Inhibition by ornithine increases at higher pH. Catalyzes the second step of the urea cycle, the condensation of carbamoyl phosphate with L-ornithine to form L-citrulline. The urea cycle ensures the detoxification of ammonia by converting it to urea for excretion. The protein is Ornithine transcarbamylase, mitochondrial of Gallus gallus (Chicken).